A 693-amino-acid chain; its full sequence is Polyphosphate kinase (693 aa).

Residue Asn-57 coordinates ATP. The Mg(2+) site is built by Arg-383 and Arg-413. Catalysis depends on His-443, which acts as the Phosphohistidine intermediate. Positions 476, 572, and 601 each coordinate ATP.

This sequence belongs to the polyphosphate kinase 1 (PPK1) family. The cofactor is Mg(2+). In terms of processing, an intermediate of this reaction is the autophosphorylated ppk in which a phosphate is covalently linked to a histidine residue through a N-P bond.

It catalyses the reaction [phosphate](n) + ATP = [phosphate](n+1) + ADP. Its function is as follows. Catalyzes the reversible transfer of the terminal phosphate of ATP to form a long-chain polyphosphate (polyP). In Acinetobacter baumannii (strain ATCC 17978 / DSM 105126 / CIP 53.77 / LMG 1025 / NCDC KC755 / 5377), this protein is Polyphosphate kinase.